The sequence spans 473 residues: Laccase-3 (473 aa).

The N-terminal stretch at 1 to 21 (MSFSSLRRALVFLGACSSALA) is a signal peptide. 2 consecutive Plastocyanin-like domains span residues 23–148 (IGPV…LVIY) and 160–298 (VDDE…ILRY). Residue Asn-75 is glycosylated (N-linked (GlcNAc...) asparagine). Residues His-85, His-87, His-130, and His-132 each contribute to the Cu cation site. 2 disulfide bridges follow: Cys-106/Cys-462 and Cys-138/Cys-221. N-linked (GlcNAc...) asparagine glycosylation is found at Asn-226, Asn-283, Asn-309, Asn-346, Asn-350, and Asn-374. One can recognise a Plastocyanin-like 3 domain in the interval 365–444 (TVPVLLQILN…AGLAIVFAED (80 aa)). Cu cation contacts are provided by His-410, His-413, His-415, His-426, Cys-427, His-428, and His-432. N-linked (GlcNAc...) asparagine glycosylation occurs at Asn-470.

This sequence belongs to the multicopper oxidase family. In terms of assembly, homodimer. Cu cation serves as cofactor.

The protein localises to the secreted. It carries out the reaction 4 hydroquinone + O2 = 4 benzosemiquinone + 2 H2O. In terms of biological role, lignin degradation and detoxification of lignin-derived products. The protein is Laccase-3 (LCC3) of Trametes villosa (White-rot fungus).